A 568-amino-acid polypeptide reads, in one-letter code: Phosphoprotein (568 aa).

2 disordered regions span residues 1 to 23 and 38 to 320; these read MDQD…GGRE and SEPT…GIGE. Positions 7–20 are enriched in basic and acidic residues; the sequence is ILKEDSEVEREAPG. The interval 33–41 is N0 binding; it reads DAVLSSEPT. The segment covering 50–59 has biased composition (polar residues); the sequence is LHNTINTPQG. The residue at position 68 (S68) is a Phosphoserine; by host. Residues 83-101 are compositionally biased toward basic and acidic residues; the sequence is RSGEESRVSGRTSKPEAEA. S125 carries the post-translational modification Phosphoserine; by host. A compositionally biased stretch (basic and acidic residues) spans 150-168; the sequence is GIEDENREMAAHPDKRGED. The segment covering 191-206 has biased composition (polar residues); it reads ASNNGRSMEPGSSHSA. S192, S249, S257, and S260 each carry phosphoserine; by host. Residues 344 to 411 form a multimerization region; it reads FESSRDASYV…SFRDIYKRFS (68 aa). Positions 364–429 form a coiled coil; sequence YAEMTFNVCG…LLMSNLSTLH (66 aa). The l protein binding stretch occupies residues 412 to 445; sequence EYQKEQNSLLMSNLSTLHIITDRGGKTDNTDSLT. A phosphoserine; by host mark is found at S447 and S449. The segment at 479–568 is interaction with the nucleocapsid (N-RNA); it reads DLIREDEFRD…VEEDIESLTN (90 aa). The interval 496-516 is disordered; the sequence is QERDTEPRASNASRLLPSKEK. The segment at 547-566 is formation of N-RNA complex involved in transcription and replication; the sequence is KTDQEVKAVMELVEEDIESL.

Belongs to the respirovirus P protein family. Homotetramer. Interacts (via multimerization domain) with polymerase L; this interaction forms the polymerase complex. Interacts (via N-terminus) with N0; this interaction allows P to chaperon N0 before encapsidation and form the N-P complex. Interacts (via C-terminus) with N-RNA template; this interaction positions the polymerase on the template. Post-translationally, phosphorylated by PKC/PRKCZ, and other unknown kinases. Phosphorylation is necessary for viral transcription and replication. The N-terminus contains the majority of phosphorylated sites. Ser-249 is the major site of phosphorylation, but is not necessary for most functions.

The protein resides in the host cytoplasm. Functionally, essential cofactor of the RNA polymerase L that plays a central role in the transcription and replication by forming the polymerase complex with RNA polymerase L and recruiting L to the genomic N-RNA template for RNA synthesis. Also plays a central role in the encapsidation of nascent RNA chains by forming the encapsidation complex with the nucleocapsid protein N (N-P complex). Acts as a chaperone for newly synthesized free N protein, so-called N0, allowing encapsidation of nascent RNA chains during replication. The nucleoprotein protein N prevents excessive phosphorylation of P, which leads to down-regulation of viral transcription/ replication. Participates, together with N, in the formation of viral factories (viroplasms), which are large inclusions in the host cytoplasm where replication takes place. Recruits host PI4KB and remodel the host endoplasmic reticulum membrane to form viral replication factories. The chain is Phosphoprotein (P/V/C) from Cavia cutleri (Guinea pig).